We begin with the raw amino-acid sequence, 621 residues long: Altered inheritance of mitochondria protein 9, mitochondrial (621 aa).

The N-terminal 40 residues, 1-40 (MIRSTTAKLGKRCATLRVRASPILRPLVATRCITNKADEV), are a transit peptide targeting the mitochondrion.

This sequence belongs to the AIM9 family.

The protein localises to the mitochondrion. The chain is Altered inheritance of mitochondria protein 9, mitochondrial (AIM9) from Zygosaccharomyces rouxii (strain ATCC 2623 / CBS 732 / NBRC 1130 / NCYC 568 / NRRL Y-229).